A 164-amino-acid chain; its full sequence is S-ribosylhomocysteine lyase (164 aa).

3 residues coordinate Fe cation: His-54, His-58, and Cys-128.

This sequence belongs to the LuxS family. In terms of assembly, homodimer. The cofactor is Fe cation.

The catalysed reaction is S-(5-deoxy-D-ribos-5-yl)-L-homocysteine = (S)-4,5-dihydroxypentane-2,3-dione + L-homocysteine. Functionally, involved in the synthesis of autoinducer 2 (AI-2) which is secreted by bacteria and is used to communicate both the cell density and the metabolic potential of the environment. The regulation of gene expression in response to changes in cell density is called quorum sensing. Catalyzes the transformation of S-ribosylhomocysteine (RHC) to homocysteine (HC) and 4,5-dihydroxy-2,3-pentadione (DPD). This Campylobacter hominis (strain ATCC BAA-381 / DSM 21671 / CCUG 45161 / LMG 19568 / NCTC 13146 / CH001A) protein is S-ribosylhomocysteine lyase.